We begin with the raw amino-acid sequence, 712 residues long: DNA topoisomerase 3 (712 aa).

A Toprim domain is found at Lys-2–Thr-135. Mg(2+) contacts are provided by Glu-8 and Asp-104. A Topo IA-type catalytic domain is found at Phe-152 to Val-581. Positions Ser-186–Gln-191 are interaction with DNA. Tyr-305 acts as the O-(5'-phospho-DNA)-tyrosine intermediate in catalysis.

Belongs to the type IA topoisomerase family. Requires Mg(2+) as cofactor.

It catalyses the reaction ATP-independent breakage of single-stranded DNA, followed by passage and rejoining.. Functionally, releases the supercoiling and torsional tension of DNA, which is introduced during the DNA replication and transcription, by transiently cleaving and rejoining one strand of the DNA duplex. Introduces a single-strand break via transesterification at a target site in duplex DNA. The scissile phosphodiester is attacked by the catalytic tyrosine of the enzyme, resulting in the formation of a DNA-(5'-phosphotyrosyl)-enzyme intermediate and the expulsion of a 3'-OH DNA strand. The free DNA strand then undergoes passage around the unbroken strand, thus removing DNA supercoils. Finally, in the religation step, the DNA 3'-OH attacks the covalent intermediate to expel the active-site tyrosine and restore the DNA phosphodiester backbone. This is DNA topoisomerase 3 from Staphylococcus saprophyticus subsp. saprophyticus (strain ATCC 15305 / DSM 20229 / NCIMB 8711 / NCTC 7292 / S-41).